The sequence spans 631 residues: 1,4-alpha-glucan branching enzyme GlgB (631 aa).

The Nucleophile role is filled by D309. The active-site Proton donor is E362.

Belongs to the glycosyl hydrolase 13 family. GlgB subfamily. Monomer.

The enzyme catalyses Transfers a segment of a (1-&gt;4)-alpha-D-glucan chain to a primary hydroxy group in a similar glucan chain.. The protein operates within glycan biosynthesis; glycogen biosynthesis. Its function is as follows. Catalyzes the formation of the alpha-1,6-glucosidic linkages in glycogen by scission of a 1,4-alpha-linked oligosaccharide from growing alpha-1,4-glucan chains and the subsequent attachment of the oligosaccharide to the alpha-1,6 position. This Marinobacter nauticus (strain ATCC 700491 / DSM 11845 / VT8) (Marinobacter aquaeolei) protein is 1,4-alpha-glucan branching enzyme GlgB.